Consider the following 768-residue polypeptide: Vitamin B12-dependent ribonucleoside-diphosphate reductase (768 aa).

The ATP-cone domain occupies 3-97 (KEVVKRDGTV…LYREKRRAIR (95 aa)). Substrate is bound by residues serine 234, 249 to 250 (AC), glycine 278, 432 to 436 (NPCGE), and 579 to 583 (PTGTI). Cysteine 250 and cysteine 445 form a disulfide bridge. Catalysis depends on asparagine 432, which acts as the Proton acceptor. Cysteine 434 functions as the Cysteine radical intermediate in the catalytic mechanism. Catalysis depends on glutamate 436, which acts as the Proton acceptor.

The protein belongs to the ribonucleoside diphosphate reductase class-2 family. Monomer. The cofactor is adenosylcob(III)alamin.

The enzyme catalyses a 2'-deoxyribonucleoside 5'-diphosphate + [thioredoxin]-disulfide + H2O = a ribonucleoside 5'-diphosphate + [thioredoxin]-dithiol. Functionally, provides the precursors necessary for DNA synthesis. Catalyzes the biosynthesis of deoxyribonucleotides from the corresponding ribonucleotides. The protein is Vitamin B12-dependent ribonucleoside-diphosphate reductase of Thermoplasma acidophilum (strain ATCC 25905 / DSM 1728 / JCM 9062 / NBRC 15155 / AMRC-C165).